A 130-amino-acid polypeptide reads, in one-letter code: Small ribosomal subunit protein uS9 (130 aa).

This sequence belongs to the universal ribosomal protein uS9 family.

The sequence is that of Small ribosomal subunit protein uS9 from Aliivibrio fischeri (strain MJ11) (Vibrio fischeri).